Reading from the N-terminus, the 109-residue chain is ATP-dependent Clp protease adapter protein ClpS (109 aa).

The tract at residues 1–23 (MTERKHDDTGVEEGTGLATKTRP) is disordered.

It belongs to the ClpS family. As to quaternary structure, binds to the N-terminal domain of the chaperone ClpA.

Involved in the modulation of the specificity of the ClpAP-mediated ATP-dependent protein degradation. The sequence is that of ATP-dependent Clp protease adapter protein ClpS from Maricaulis maris (strain MCS10) (Caulobacter maris).